We begin with the raw amino-acid sequence, 138 residues long: Nucleoside diphosphate kinase (138 aa).

The ATP site is built by Lys-9, Phe-57, Arg-85, Thr-91, Arg-102, and Asn-112. The active-site Pros-phosphohistidine intermediate is the His-115.

This sequence belongs to the NDK family. Homotetramer. Mg(2+) serves as cofactor.

The protein localises to the cytoplasm. The enzyme catalyses a 2'-deoxyribonucleoside 5'-diphosphate + ATP = a 2'-deoxyribonucleoside 5'-triphosphate + ADP. It catalyses the reaction a ribonucleoside 5'-diphosphate + ATP = a ribonucleoside 5'-triphosphate + ADP. Functionally, major role in the synthesis of nucleoside triphosphates other than ATP. The ATP gamma phosphate is transferred to the NDP beta phosphate via a ping-pong mechanism, using a phosphorylated active-site intermediate. This chain is Nucleoside diphosphate kinase, found in Lawsonia intracellularis (strain PHE/MN1-00).